Here is a 1219-residue protein sequence, read N- to C-terminus: Regulator of telomere elongation helicase 1 (1219 aa).

A Helicase ATP-binding domain is found at 7–296 (NGVTVDFPFQ…TKAAQQGEPH (290 aa)). 42 to 49 (SPTGTGKT) is an ATP binding site. [4Fe-4S] cluster contacts are provided by C145, C163, C172, and C207. The short motif at 151 to 167 (KKQESNHLQIHLCRKKV) is the Nuclear localization signal element. A DEAH box motif is present at residues 250–253 (DEAH). Disordered regions lie at residues 287-306 (TKAA…SPSP), 757-786 (PAPA…FFST), 839-877 (EHSE…GRKK), 979-1005 (RPEH…PDPK), 1017-1054 (DPQE…RAGK), 1132-1151 (CTDL…PQEE), and 1159-1219 (LTHR…EWGL). Positions 757-766 (PAPAPRATAP) are enriched in low complexity. A compositionally biased stretch (basic and acidic residues) spans 863 to 873 (SEKRPAEEPRG). The short motif at 871 to 877 (PRGGRKK) is the Nuclear localization signal element. Residues 1176–1185 (KTQSKISSFL) show a composition bias toward polar residues. The PIP-box motif lies at 1178–1185 (QSKISSFL). Low complexity predominate over residues 1200 to 1219 (AGPSQSSGPPHGPAASEWGL).

The protein belongs to the helicase family. RAD3/XPD subfamily. As to quaternary structure, interacts with TERF1. Interacts (via PIP-box) with PCNA; the interaction is direct and essential for suppressing telomere fragility. Interacts with MMS19; the interaction mediates the association of RTEL1 with the cytosolic iron-sulfur protein assembly (CIA) complex.

It is found in the nucleus. The catalysed reaction is ATP + H2O = ADP + phosphate + H(+). In terms of biological role, a probable ATP-dependent DNA helicase implicated in telomere-length regulation, DNA repair and the maintenance of genomic stability. Acts as an anti-recombinase to counteract toxic recombination and limit crossover during meiosis. Regulates meiotic recombination and crossover homeostasis by physically dissociating strand invasion events and thereby promotes noncrossover repair by meiotic synthesis dependent strand annealing (SDSA) as well as disassembly of D loop recombination intermediates. Also disassembles T loops and prevents telomere fragility by counteracting telomeric G4-DNA structures, which together ensure the dynamics and stability of the telomere. This is Regulator of telomere elongation helicase 1 from Homo sapiens (Human).